We begin with the raw amino-acid sequence, 20 residues long: Antifreeze protein (20 aa).

N-glycosylated and O-glycosylated.

Its subcellular location is the secreted. It is found in the extracellular space. Its function is as follows. Antifreeze proteins bind to the surface of ice crystals and inhibit the growth of these crystals, this inhibition causes thermal hysteresis. Causes the shape of ice crystals to change from hexagonal to a bipyramidal shape with rugged facets. Inhibits recrystallization of ice crystals. This Antarctomyces psychrotrophicus protein is Antifreeze protein.